Reading from the N-terminus, the 498-residue chain is Protein disulfide-isomerase (498 aa).

The N-terminal stretch at 1-23 (MASFRGSIWYCIFVLSLIAVAIS) is a signal peptide. Thioredoxin domains are found at residues 24–143 (AAES…KQSG) and 339–484 (YLKA…KNRD). Residue asparagine 41 is glycosylated (N-linked (GlcNAc...) asparagine). Residues cysteine 61, cysteine 64, cysteine 406, and cysteine 409 each act as nucleophile in the active site. Cystine bridges form between cysteine 61-cysteine 64 and cysteine 406-cysteine 409. The Prevents secretion from ER signature appears at 495–498 (KDEL).

This sequence belongs to the protein disulfide isomerase family.

The protein resides in the endoplasmic reticulum lumen. It catalyses the reaction Catalyzes the rearrangement of -S-S- bonds in proteins.. In terms of biological role, participates in the folding of proteins containing disulfide bonds, may be involved in glycosylation, prolyl hydroxylation and triglyceride transfer. The polypeptide is Protein disulfide-isomerase (Ricinus communis (Castor bean)).